The primary structure comprises 333 residues: Transcription initiation factor IIB (333 aa).

The TFIIB-type zinc finger occupies 33 to 64 (EVYKCPICGNDKFVYNYERGEAVCIVCGAVVQ). 4 residues coordinate Zn(2+): Cys37, Cys40, Cys56, and Cys59. 2 repeat units span residues 149–232 (QELE…LREL) and 243–324 (LYIS…ELAK).

It belongs to the TFIIB family.

Functionally, stabilizes TBP binding to an archaeal box-A promoter. Also responsible for recruiting RNA polymerase II to the pre-initiation complex (DNA-TBP-TFIIB). This Pyrobaculum aerophilum (strain ATCC 51768 / DSM 7523 / JCM 9630 / CIP 104966 / NBRC 100827 / IM2) protein is Transcription initiation factor IIB.